The sequence spans 261 residues: Cytochrome c oxidase subunit 3 (261 aa).

At 1–15 (MAHQAHSYHMVDPSP) the chain is on the mitochondrial matrix side. A helical membrane pass occupies residues 16–34 (WPIFGAAAALLTTSGLIMW). Topologically, residues 35–40 (FHYSST) are mitochondrial intermembrane. A helical transmembrane segment spans residues 41-66 (TLLTMGLLSMLLVMLQWWRDVVREST). Residues 67–72 (FQGHHT) are Mitochondrial matrix-facing. The chain crosses the membrane as a helical span at residues 73–105 (PTVQKGLRYGMILFITSEAFFFLGFFWAFFHSS). At 106-128 (LAPTPELGGQWPPTGVKPLNPLE) the chain is on the mitochondrial intermembrane side. A helical transmembrane segment spans residues 129–152 (VPLLNTAILLASGVTVTWAHHSIT). Topologically, residues 153–155 (EGN) are mitochondrial matrix. A helical transmembrane segment spans residues 156–183 (RKQAIHALTLTILLGFYFTALQAMEYHE). Residues 184-190 (ASFSIAD) lie on the Mitochondrial intermembrane side of the membrane. The helical transmembrane segment at 191-223 (SVYGSTFFVATGFHGLHVIIGSSFLTVCLLRLI) threads the bilayer. At 224–232 (KFHFTPNHH) the chain is on the mitochondrial matrix side. A helical transmembrane segment spans residues 233–256 (FGFEAAAWYWHFVDIIWLFLYMSM). Topologically, residues 257-261 (YWWGS) are mitochondrial intermembrane.

This sequence belongs to the cytochrome c oxidase subunit 3 family. As to quaternary structure, component of the cytochrome c oxidase (complex IV, CIV), a multisubunit enzyme composed of 14 subunits. The complex is composed of a catalytic core of 3 subunits MT-CO1, MT-CO2 and MT-CO3, encoded in the mitochondrial DNA, and 11 supernumerary subunits COX4I, COX5A, COX5B, COX6A, COX6B, COX6C, COX7A, COX7B, COX7C, COX8 and NDUFA4, which are encoded in the nuclear genome. The complex exists as a monomer or a dimer and forms supercomplexes (SCs) in the inner mitochondrial membrane with NADH-ubiquinone oxidoreductase (complex I, CI) and ubiquinol-cytochrome c oxidoreductase (cytochrome b-c1 complex, complex III, CIII), resulting in different assemblies (supercomplex SCI(1)III(2)IV(1) and megacomplex MCI(2)III(2)IV(2)).

The protein localises to the mitochondrion inner membrane. The enzyme catalyses 4 Fe(II)-[cytochrome c] + O2 + 8 H(+)(in) = 4 Fe(III)-[cytochrome c] + 2 H2O + 4 H(+)(out). Component of the cytochrome c oxidase, the last enzyme in the mitochondrial electron transport chain which drives oxidative phosphorylation. The respiratory chain contains 3 multisubunit complexes succinate dehydrogenase (complex II, CII), ubiquinol-cytochrome c oxidoreductase (cytochrome b-c1 complex, complex III, CIII) and cytochrome c oxidase (complex IV, CIV), that cooperate to transfer electrons derived from NADH and succinate to molecular oxygen, creating an electrochemical gradient over the inner membrane that drives transmembrane transport and the ATP synthase. Cytochrome c oxidase is the component of the respiratory chain that catalyzes the reduction of oxygen to water. Electrons originating from reduced cytochrome c in the intermembrane space (IMS) are transferred via the dinuclear copper A center (CU(A)) of subunit 2 and heme A of subunit 1 to the active site in subunit 1, a binuclear center (BNC) formed by heme A3 and copper B (CU(B)). The BNC reduces molecular oxygen to 2 water molecules using 4 electrons from cytochrome c in the IMS and 4 protons from the mitochondrial matrix. The sequence is that of Cytochrome c oxidase subunit 3 (MT-CO3) from Gallus gallus (Chicken).